The sequence spans 690 residues: Iron-regulated transcriptional activator AFT1 (690 aa).

The segment at 1–21 (MEGFNPADIEHASPINSSDSH) is disordered. Asp110 lines the Zn(2+) pocket. DNA contacts are provided by Lys111, Lys115, Ile131, Glu132, Arg133, Ser134, Asp135, and Lys138. Cys143 provides a ligand contact to Zn(2+). Residues 148–159 (RGRNARRKRKDK) show a composition bias toward basic residues. The disordered stretch occupies residues 148 to 205 (RGRNARRKRKDKPKGQDHEDEKSKINDDELEYASPSNATVTNGPQTSPDQTSSIKPKK). Basic and acidic residues predominate over residues 160-174 (PKGQDHEDEKSKIND). Positions 181-201 (SPSNATVTNGPQTSPDQTSSI) are enriched in polar residues. Residue Cys215 coordinates Zn(2+). Lys226 serves as a coordination point for DNA. Residues His239 and His241 each coordinate Zn(2+). Asn263 is a DNA binding site. The CDC [2Fe-2S] cluster binding motif motif lies at 291-293 (CDC). 2 disordered regions span residues 335–357 (PCLP…PKSQ) and 612–655 (SSNE…VQKD). Residues 339 to 351 (SVNNTGSINTNNV) show a composition bias toward polar residues. Positions 621–638 (HQYGPQQQPPQQLQYHQN) are enriched in low complexity. Residues 639 to 649 (QPHDGHNHEQH) are compositionally biased toward basic and acidic residues.

Homodimer. Dimerization decreases the DNA-binding activity.

It localises to the nucleus. Its activity is regulated as follows. Dimerization via the binding of Fe(2+) or a [2Fe-2S] cluster decreases the DNA-binding activity. Transcription factor that activates the genes for FRE1, FRE2 and FET3 in response to iron deprivationand thereby plays a central role in iron homeostasis. Also required for the expression of LSO1. Recognizes the consensus iron-responsive element (Fe-RE) sequence 5'-CACCC-3' in the promoters of target genes. Iron could interact directly with AFT1 and inhibits its activity. In high iron condition, the presence of Fe(2+) or [2Fe-2S] cluster leads to dimerization, which in turn leads to a decrease in DNA affinity. This chain is Iron-regulated transcriptional activator AFT1, found in Saccharomyces cerevisiae (strain ATCC 204508 / S288c) (Baker's yeast).